Consider the following 176-residue polypeptide: 3-hydroxyanthranilate 3,4-dioxygenase (176 aa).

An O2-binding site is contributed by Arg-44. Residues His-48, Glu-54, and His-92 each contribute to the Fe cation site. Glu-54 contributes to the substrate binding site. The substrate site is built by Arg-96 and Glu-106. Residues Cys-121, Cys-124, Cys-158, and Cys-161 each contribute to the Fe cation site.

It belongs to the 3-HAO family. In terms of assembly, homodimer. It depends on Fe(2+) as a cofactor.

The catalysed reaction is 3-hydroxyanthranilate + O2 = (2Z,4Z)-2-amino-3-carboxymuconate 6-semialdehyde. The protein operates within cofactor biosynthesis; NAD(+) biosynthesis; quinolinate from L-kynurenine: step 3/3. In terms of biological role, catalyzes the oxidative ring opening of 3-hydroxyanthranilate to 2-amino-3-carboxymuconate semialdehyde, which spontaneously cyclizes to quinolinate. The protein is 3-hydroxyanthranilate 3,4-dioxygenase of Xanthomonas oryzae pv. oryzae (strain MAFF 311018).